The chain runs to 784 residues: Homoaconitase, mitochondrial (784 aa).

A mitochondrion-targeting transit peptide spans 1–32 (MIHPVRRALAVAASRAPRQFLAAASRTTSVRS). The [4Fe-4S] cluster site is built by C399, C468, and C471. A disordered region spans residues 572–596 (EAGLTPESTSSSSSSSSSSEEESLT). Positions 578 to 589 (ESTSSSSSSSSS) are enriched in low complexity.

Belongs to the aconitase/IPM isomerase family. [4Fe-4S] cluster is required as a cofactor.

It localises to the mitochondrion. It catalyses the reaction (2R,3S)-homoisocitrate = cis-homoaconitate + H2O. It participates in amino-acid biosynthesis; L-lysine biosynthesis via AAA pathway; L-alpha-aminoadipate from 2-oxoglutarate: step 3/5. Its function is as follows. Catalyzes the reversible hydration of cis-homoaconitate to (2R,3S)-homoisocitrate, a step in the alpha-aminoadipate pathway for lysine biosynthesis. This Neurospora crassa (strain ATCC 24698 / 74-OR23-1A / CBS 708.71 / DSM 1257 / FGSC 987) protein is Homoaconitase, mitochondrial (lys-4).